The primary structure comprises 542 residues: MATRGANVIWFRHGLRLHDNPALLAALADKDQGIALIPVFIFDGESAGTKNVGYNRMRFLLDSLQDIDDQLQAATDGRGRLLVFEGEPAYIFRRLHEQVRLHRICIEQDCEPIWNERDESIRSLCRELNIDFVEKVSHTLWDPQLVIETNGGIPPLTYQMFLHTVQIIGLPPRPTADARLEDATFVELDPEFCRSLKLFEQLPTPEHFNVYGDNMGFLAKINWRGGETQALLLLDERLKVEQHAFERGFYLPNQALPNIHDSPKSMSAHLRFGCLSVRRFYWSVHDLFKNVQLRACVRGVQMTGGAHITGQLIWREYFYTMSVNNPNYDRMEGNDICLSIPWAKPNENLLQSWRLGQTGFPLIDGAMRQLLAEGWLHHTLRNTVATFLTRGGLWQSWEHGLQHFLKYLLDADWSVCAGNWMWVSSSAFERLLDSSLVTCPVALAKRLDPDGTYIKQYVPELMNVPKEFVHEPWRMSAEQQEQYECLIGVHYPERIIDLSMAVKRNMLAMKSLRNSLITPPPHCRPSNEEEVRQFFWLADVVV.

A Photolyase/cryptochrome alpha/beta domain is found at Gly5–Leu140. FAD contacts are provided by residues Arg237, Ser265, Ser267, Gln311, His378, Asp410–Asp412, Cys416, and Asn419.

Belongs to the DNA photolyase class-1 family. As to quaternary structure, interacts with tim and per; promoted by light conditions. Interaction with tim irreversibly commits tim to proteasomal degradation. Interacts with l(1)G0136/CG8198. Requires FAD as cofactor. As to expression, expressed at higher levels in the head than in body and it is more expressed in antennae than in legs, wings and mouth appendages. Prominent expression is seen in cells of the lateral brain, which are close to or coincident with the clock neurons. Abundance oscillates in a circadian manner.

It is found in the cytoplasm. Its subcellular location is the perinuclear region. It localises to the nucleus. Blue light-dependent regulator that is the input of the circadian feedback loop. Has no photolyase activity for cyclobutane pyrimidine dimers or 6-4 photoproducts. Regulation of expression by light suggests a role in photoreception for locomotor activity rhythms. Functions, together with per, as a transcriptional repressor required for the oscillation of peripheral circadian clocks and for the correct specification of clock cells. Genes directly activated by the transcription factors Clock (Clk) and cycle (cyc) are repressed by cry. Necessary for light-dependent magnetosensitivity, an intact circadian system is not required for the magnetoreception mechanism to operate. Required for both the naive and trained responses to magnetic field, consistent with the notion that cry is in the input pathway of magnetic sensing. The polypeptide is Cryptochrome-1 (Drosophila melanogaster (Fruit fly)).